We begin with the raw amino-acid sequence, 634 residues long: Fluorothreonine transaldolase (634 aa).

Pyridoxal 5'-phosphate-binding residues include Tyr67, His221, and His247. An N6-(pyridoxal phosphate)lysine modification is found at Lys248. Arg375 lines the pyridoxal 5'-phosphate pocket. The segment at 428 to 456 (TGDPASAAGPPARERYAPPTAPAGHPARP) is disordered.

It belongs to the SHMT family. Pyridoxal 5'-phosphate serves as cofactor.

The enzyme catalyses fluoroacetaldehyde + L-threonine = 4-fluoro-L-threonine + acetaldehyde. Transaldolase that catalyzes the final step in 4-fluorothreonine biosynthesis. Mediates a L-threonine/fluoroaceldehyde to 4-fluoro-L-threonine/acetaldehyde crossover reaction. Can also convert chloroacetaldehyde into 4-chloro-L-threonine. Does not use glycine as a substrate. This is Fluorothreonine transaldolase from Streptantibioticus cattleyicolor (Streptomyces cattleya).